The primary structure comprises 236 residues: uncharacterized protein (236 aa).

The first 29 residues, 1–29 (MKGGDKMKKLILLMLLLPISLIGCTDEES), serve as a signal peptide directing secretion.

This is an uncharacterized protein from Archaeoglobus fulgidus (strain ATCC 49558 / DSM 4304 / JCM 9628 / NBRC 100126 / VC-16).